A 209-amino-acid chain; its full sequence is Pyridoxine/pyridoxamine 5'-phosphate oxidase (209 aa).

Substrate-binding positions include 7–10 (REDY) and Lys64. FMN is bound by residues 59–64 (RIVLLK), 74–75 (FT), Arg80, and Lys81. Tyr121, Arg125, and Ser129 together coordinate substrate. Residues 138-139 (QS) and Trp182 contribute to the FMN site. 188–190 (RLH) is a substrate binding site. Arg192 serves as a coordination point for FMN.

Belongs to the pyridoxamine 5'-phosphate oxidase family. As to quaternary structure, homodimer. Requires FMN as cofactor.

It carries out the reaction pyridoxamine 5'-phosphate + O2 + H2O = pyridoxal 5'-phosphate + H2O2 + NH4(+). It catalyses the reaction pyridoxine 5'-phosphate + O2 = pyridoxal 5'-phosphate + H2O2. It participates in cofactor metabolism; pyridoxal 5'-phosphate salvage; pyridoxal 5'-phosphate from pyridoxamine 5'-phosphate: step 1/1. Its pathway is cofactor metabolism; pyridoxal 5'-phosphate salvage; pyridoxal 5'-phosphate from pyridoxine 5'-phosphate: step 1/1. Catalyzes the oxidation of either pyridoxine 5'-phosphate (PNP) or pyridoxamine 5'-phosphate (PMP) into pyridoxal 5'-phosphate (PLP). This chain is Pyridoxine/pyridoxamine 5'-phosphate oxidase, found in Actinobacillus pleuropneumoniae serotype 7 (strain AP76).